Consider the following 307-residue polypeptide: tRNA dimethylallyltransferase (307 aa).

An ATP-binding site is contributed by 10-17 (GPTASGKS). A substrate-binding site is contributed by 12–17 (TASGKS). Interaction with substrate tRNA regions lie at residues 35–38 (DSMQ) and 159–163 (QRLCR).

Belongs to the IPP transferase family. As to quaternary structure, monomer. Requires Mg(2+) as cofactor.

The catalysed reaction is adenosine(37) in tRNA + dimethylallyl diphosphate = N(6)-dimethylallyladenosine(37) in tRNA + diphosphate. Catalyzes the transfer of a dimethylallyl group onto the adenine at position 37 in tRNAs that read codons beginning with uridine, leading to the formation of N6-(dimethylallyl)adenosine (i(6)A). The chain is tRNA dimethylallyltransferase from Phenylobacterium zucineum (strain HLK1).